Here is a 1071-residue protein sequence, read N- to C-terminus: DNA-directed RNA polymerase subunit beta (1071 aa).

This sequence belongs to the RNA polymerase beta chain family. In terms of assembly, in plastids the minimal PEP RNA polymerase catalytic core is composed of four subunits: alpha, beta, beta', and beta''. When a (nuclear-encoded) sigma factor is associated with the core the holoenzyme is formed, which can initiate transcription.

The protein localises to the plastid. It is found in the chloroplast. It carries out the reaction RNA(n) + a ribonucleoside 5'-triphosphate = RNA(n+1) + diphosphate. Its function is as follows. DNA-dependent RNA polymerase catalyzes the transcription of DNA into RNA using the four ribonucleoside triphosphates as substrates. This Acorus gramineus (Dwarf sweet flag) protein is DNA-directed RNA polymerase subunit beta.